Here is a 136-residue protein sequence, read N- to C-terminus: MTAYAAIIGTKDNPVYELEMGPINEKLDRSLNSHLNQFIVHSSLDIVDQLQWTSNAFYMKTIDQFHEMYISAYVTPSNMRFMLLHQNQSADNIKLFFQELHELYIKTLMSPFYQPNQPIRSQAFDLKVRSIARRYL.

Belongs to the TRAPP small subunits family. Sedlin subfamily.

Its subcellular location is the cytoplasm. It localises to the golgi apparatus. The protein localises to the cis-Golgi network. It is found in the endoplasmic reticulum. In terms of biological role, component of the TRAPP I and TRAPP II complexes. TRAPP I plays a key role in the late stages of endoplasmic reticulum to Golgi traffic. TRAPP II seems to play a role in intra-Golgi transport. The chain is Transport protein particle 20 kDa subunit (trs20) from Schizosaccharomyces pombe (strain 972 / ATCC 24843) (Fission yeast).